Reading from the N-terminus, the 307-residue chain is MADLQERGHLLTEQVNPLSQNLDQLSSLELVELFNSEDLKTVEAVAAAKVQIATAIEQTADRLRQGGRLFYVGAGTSGRLGVLDAAECPPTFCTPPELVQGIIAGGAGALVRSSEDLEDRAEDGDAAIAQRHITQLDVVVGITAGGTTPFVQGAINSARQRGALTIFIACVPAEQVSFTADIDIRLLTGPEILAGSTRLKAGTVTKLTLNILSTGVMVKLGKVYGNRMVDVAVTNQKLRDRALRILQDLTGLSREAAGFLLERSSKWVKLALVMHWTGLDKDAGDRLLSAHQGNLREAVASYKNQND.

In terms of domain architecture, SIS spans 59–222 (TADRLRQGGR…STGVMVKLGK (164 aa)). Residue glutamate 87 is the Proton donor of the active site. Residue glutamate 118 is part of the active site.

It belongs to the GCKR-like family. MurNAc-6-P etherase subfamily. As to quaternary structure, homodimer.

The catalysed reaction is N-acetyl-D-muramate 6-phosphate + H2O = N-acetyl-D-glucosamine 6-phosphate + (R)-lactate. Its pathway is amino-sugar metabolism; N-acetylmuramate degradation. Specifically catalyzes the cleavage of the D-lactyl ether substituent of MurNAc 6-phosphate, producing GlcNAc 6-phosphate and D-lactate. The sequence is that of N-acetylmuramic acid 6-phosphate etherase from Nostoc sp. (strain PCC 7120 / SAG 25.82 / UTEX 2576).